Reading from the N-terminus, the 616-residue chain is Carboxylic acid transporter protein homolog (616 aa).

Residues 1–11 are compositionally biased toward basic and acidic residues; sequence MSSSITDEKIS. Residues 1-65 form a disordered region; sequence MSSSITDEKI…LYHNPSLPAQ (65 aa). At Ser-2 the chain carries N-acetylserine. The Cytoplasmic segment spans residues 2 to 140; it reads SSSITDEKIS…LRKMTWQNWN (139 aa). Phosphoserine is present on Ser-4. Residue Lys-9 forms a Glycyl lysine isopeptide (Lys-Gly) (interchain with G-Cter in ubiquitin) linkage. A phosphoserine mark is found at Ser-11, Ser-61, and Ser-66. At Thr-70 the chain carries Phosphothreonine. Residues 141–161 form a helical membrane-spanning segment; the sequence is YFFMGYFAWLSAAWAFFCVSV. The Extracellular segment spans residues 162 to 176; that stretch reads SVAPLAELYDRPTKD. Residues 177 to 197 traverse the membrane as a helical segment; the sequence is ITWGLGLVLFVRSAGAVIFGL. Topologically, residues 198 to 205 are cytoplasmic; the sequence is WTDKSSRK. The chain crosses the membrane as a helical span at residues 206–226; sequence WPYITCLFLFVIAQLCTPWCD. Residues 227 to 230 lie on the Extracellular side of the membrane; it reads TYEK. The chain crosses the membrane as a helical span at residues 231-251; the sequence is FLGVRWITGIAMGGIYGCASA. Residues 252-263 lie on the Cytoplasmic side of the membrane; it reads TAIEDAPVKARS. The helical transmembrane segment at 264 to 284 threads the bilayer; it reads FLSGLFFSAYAMGFIFAIIFY. Topologically, residues 285 to 296 are extracellular; that stretch reads RAFGYFRDDGWK. The helical transmembrane segment at 297 to 317 threads the bilayer; sequence ILFWFSIFLPILLIFWRLLWP. At 318–363 the chain is on the cytoplasmic side; sequence ETKYFTKVLKARKLILSDAVKANGGEPLPKANFKQKMVSMKRTVQK. Lys-338 is covalently cross-linked (Glycyl lysine isopeptide (Lys-Gly) (interchain with G-Cter in ubiquitin)). The chain crosses the membrane as a helical span at residues 364–384; it reads YWLLFAYLVVLLVGPNYLTHA. The Extracellular segment spans residues 385-402; sequence SQDLLPTMLRAQLGLSKD. Residues 403 to 423 traverse the membrane as a helical segment; the sequence is AVTVIVVVTNIGAICGGMIFG. The Cytoplasmic portion of the chain corresponds to 424 to 432; sequence QFMEVTGRR. The helical transmembrane segment at 433 to 453 threads the bilayer; the sequence is LGLLIACTMGGCFTYPAFMLR. At 454–457 the chain is on the extracellular side; sequence SEKA. A helical membrane pass occupies residues 458 to 478; it reads ILGAGFMLYFCVFGVWGILPI. Topologically, residues 479-489 are cytoplasmic; that stretch reads HLAELAPADAR. The chain crosses the membrane as a helical span at residues 490–510; sequence ALVAGLSYQLGNLASAAASTI. The Extracellular portion of the chain corresponds to 511 to 535; that stretch reads ETQLADRYPLERDASGAVIKEDYAK. A helical transmembrane segment spans residues 536-556; that stretch reads VMAILTGSVFIFTFACVFVGH. At 557 to 616 the chain is on the cytoplasmic side; sequence EKFHRDLSSPVMKKYINQVEEYEADGLSISDIVEQKTECASVKMIDSNVSKTYEEHIETV. Phosphoserine occurs at positions 584, 603, and 606.

It belongs to the major facilitator superfamily. Sugar transporter (TC 2.A.1.1) family.

The protein localises to the membrane. Essential to lactate transport. The polypeptide is Carboxylic acid transporter protein homolog (JEN1) (Saccharomyces cerevisiae (strain ATCC 204508 / S288c) (Baker's yeast)).